The chain runs to 470 residues: ATP synthase subunit beta (470 aa).

Residue 156–163 (GGAGVGKT) participates in ATP binding.

It belongs to the ATPase alpha/beta chains family. F-type ATPases have 2 components, CF(1) - the catalytic core - and CF(0) - the membrane proton channel. CF(1) has five subunits: alpha(3), beta(3), gamma(1), delta(1), epsilon(1). CF(0) has three main subunits: a(1), b(2) and c(9-12). The alpha and beta chains form an alternating ring which encloses part of the gamma chain. CF(1) is attached to CF(0) by a central stalk formed by the gamma and epsilon chains, while a peripheral stalk is formed by the delta and b chains.

It localises to the cell inner membrane. It catalyses the reaction ATP + H2O + 4 H(+)(in) = ADP + phosphate + 5 H(+)(out). Produces ATP from ADP in the presence of a proton gradient across the membrane. The catalytic sites are hosted primarily by the beta subunits. The polypeptide is ATP synthase subunit beta (Nitratidesulfovibrio vulgaris (strain ATCC 29579 / DSM 644 / CCUG 34227 / NCIMB 8303 / VKM B-1760 / Hildenborough) (Desulfovibrio vulgaris)).